The sequence spans 56 residues: Large ribosomal subunit protein bL32 (56 aa).

A disordered region spans residues 1–40 (MAVQQNKKSRSKRGMRRSHDSLGTAQLSVDATSGELHRRH). Positions 7–16 (KKSRSKRGMR) are enriched in basic residues. The span at 21–31 (SLGTAQLSVDA) shows a compositional bias: polar residues.

Belongs to the bacterial ribosomal protein bL32 family.

The chain is Large ribosomal subunit protein bL32 from Shewanella halifaxensis (strain HAW-EB4).